A 1624-amino-acid polypeptide reads, in one-letter code: ATP-binding cassette sub-family A member 9 (1624 aa).

Residues 31–51 (LLEWLFSFLLVLFLYLFFSNL) traverse the membrane as a helical segment. N-linked (GlcNAc...) asparagine glycans are attached at residues N120 and N195. Transmembrane regions (helical) follow at residues 221-243 (VATDFFIFFCIISFSTFIYYVSV), 269-289 (SWGLMYAGFILIMATLMALIV), 300-320 (FVMVFTLFLLYGLSLITLAFL), 329-349 (FLTGLVVFLLIVFWGILGFPA), 354-374 (LPAFLEWTLCLLSPFAFTVGM), and 398-418 (LIIATLFMLVFDTLLYLVLTL). Residues 481 to 716 (IRIKNLKKEY…WGIGYHLSLH (236 aa)) enclose the ABC transporter 1 domain. 517-524 (GHSGAGKT) is a binding site for ATP. The helical transmembrane segment at 864-884 (LWTILLLFGISFIPQLLEHLF) threads the bilayer. N949 carries N-linked (GlcNAc...) asparagine glycosylation. The next 6 membrane-spanning stretches (helical) occupy residues 1026–1046 (TFFWIPMAASFTPYIAMSSIG), 1065–1085 (AYWFGQALVDVSLYFLILLLM), 1108–1128 (ILCSIGYVSSLVFLTYVISFI), 1136–1156 (SGIWSFFFLIVVIFSIVATDL), 1163–1183 (GLFFGTMLIPPFTLIGSLFIF), and 1200–1220 (EIVYLALLIPYLHFLIFLFIL). Residues 1288–1521 (LRKEYAGKKK…FGKDYLLEMK (234 aa)) form the ABC transporter 2 domain. 1326–1333 (GHNGAGKS) is a binding site for ATP.

It belongs to the ABC transporter superfamily. ABCA family. Widely expressed with higher expression in heart.

It localises to the membrane. Functionally, transporter that may play a role in monocyte differentiation and lipid transport and homeostasis. The chain is ATP-binding cassette sub-family A member 9 (ABCA9) from Homo sapiens (Human).